The primary structure comprises 437 residues: Ribosomal protein uS12 methylthiotransferase RimO (437 aa).

The MTTase N-terminal domain maps to 4–114 (PRIGFISLGC…VMNAVHEHLP (111 aa)). 6 residues coordinate [4Fe-4S] cluster: cysteine 13, cysteine 49, cysteine 78, cysteine 145, cysteine 149, and cysteine 152. The Radical SAM core domain maps to 131–368 (LTPRHYAYLK…MEVQERISAA (238 aa)). The 67-residue stretch at 371–437 (RTRIGRTETV…AHDLWARLAD (67 aa)) folds into the TRAM domain.

This sequence belongs to the methylthiotransferase family. RimO subfamily. [4Fe-4S] cluster is required as a cofactor.

The protein localises to the cytoplasm. The catalysed reaction is L-aspartate(89)-[ribosomal protein uS12]-hydrogen + (sulfur carrier)-SH + AH2 + 2 S-adenosyl-L-methionine = 3-methylsulfanyl-L-aspartate(89)-[ribosomal protein uS12]-hydrogen + (sulfur carrier)-H + 5'-deoxyadenosine + L-methionine + A + S-adenosyl-L-homocysteine + 2 H(+). In terms of biological role, catalyzes the methylthiolation of an aspartic acid residue of ribosomal protein uS12. In Methylococcus capsulatus (strain ATCC 33009 / NCIMB 11132 / Bath), this protein is Ribosomal protein uS12 methylthiotransferase RimO.